The primary structure comprises 279 residues: Putative pyruvate, phosphate dikinase regulatory protein (279 aa).

Residue Gly-152–Ser-159 participates in ADP binding.

This sequence belongs to the pyruvate, phosphate/water dikinase regulatory protein family. PDRP subfamily.

The enzyme catalyses N(tele)-phospho-L-histidyl/L-threonyl-[pyruvate, phosphate dikinase] + ADP = N(tele)-phospho-L-histidyl/O-phospho-L-threonyl-[pyruvate, phosphate dikinase] + AMP + H(+). The catalysed reaction is N(tele)-phospho-L-histidyl/O-phospho-L-threonyl-[pyruvate, phosphate dikinase] + phosphate + H(+) = N(tele)-phospho-L-histidyl/L-threonyl-[pyruvate, phosphate dikinase] + diphosphate. Its function is as follows. Bifunctional serine/threonine kinase and phosphorylase involved in the regulation of the pyruvate, phosphate dikinase (PPDK) by catalyzing its phosphorylation/dephosphorylation. The sequence is that of Putative pyruvate, phosphate dikinase regulatory protein from Anaplasma marginale (strain Florida).